Consider the following 199-residue polypeptide: Large ribosomal subunit protein bL25 (199 aa).

The protein belongs to the bacterial ribosomal protein bL25 family. CTC subfamily. In terms of assembly, part of the 50S ribosomal subunit; part of the 5S rRNA/L5/L18/L25 subcomplex. Contacts the 5S rRNA. Binds to the 5S rRNA independently of L5 and L18.

This is one of the proteins that binds to the 5S RNA in the ribosome where it forms part of the central protuberance. The polypeptide is Large ribosomal subunit protein bL25 (Caldanaerobacter subterraneus subsp. tengcongensis (strain DSM 15242 / JCM 11007 / NBRC 100824 / MB4) (Thermoanaerobacter tengcongensis)).